Consider the following 1359-residue polypeptide: NPC1-like intracellular cholesterol transporter 1 (1359 aa).

An N-terminal signal peptide occupies residues 1–21; sequence MAEAGLRGWLLWALLLRLAQS. Over 22-284 the chain is Extracellular; it reads EPYTTIHQPG…TFYLGQMPGS (263 aa). Intrachain disulfides connect C33-C90, C39-C57, C78-C125, C91-C129, C113-C254, C116-C172, C189-C197, C243-C259, and C256-C263. N-linked (GlcNAc...) asparagine glycosylation is present at N54. 2 N-linked (GlcNAc...) asparagine glycosylation sites follow: N132 and N138. N244 carries N-linked (GlcNAc...) asparagine glycosylation. The helical transmembrane segment at 285–305 threads the bilayer; it reads LVLIIILCSVFAVVTILLVGF. The Cytoplasmic portion of the chain corresponds to 306-351; the sequence is RVAPARDKSKMVDPKKGTSLSDKLSFSTHTLLGQFFQGWGTWVASW. The chain crosses the membrane as a helical span at residues 352 to 372; that stretch reads PLTILVLSVIPVVALAAGLVF. The Extracellular segment spans residues 373 to 632; sequence TELTTDPVEL…DEINRTTAED (260 aa). N416, N431, N464, N479, N497, and N506 each carry an N-linked (GlcNAc...) asparagine glycan. A disulfide bridge connects residues C471 and C485. A disulfide bridge connects residues C525 and C542. N626 carries N-linked (GlcNAc...) asparagine glycosylation. In terms of domain architecture, SSD spans 632–797; sequence DLPIFATSYI…MSAFVALLSL (166 aa). Residues 633 to 653 traverse the membrane as a helical segment; it reads LPIFATSYIVIFLYISLALGS. The Cytoplasmic portion of the chain corresponds to 654-666; it reads YSSWSRVMVDSKA. A helical transmembrane segment spans residues 667–687; that stretch reads TLGLGGVAVVLGAVMAAMGFF. Over 688–696 the chain is Extracellular; that stretch reads SYLGIRSSL. A helical membrane pass occupies residues 697–717; that stretch reads VILQVVPFLVLSVGADNIFIF. The Cytoplasmic segment spans residues 718–742; sequence VLEYQRLPRRPGEPREVHIGRALGR. The chain crosses the membrane as a helical span at residues 743–763; sequence VAPSMLLCSLSEAICFFLGAL. Topologically, residues 764–776 are extracellular; the sequence is TPMPAVRTFALTS. The helical transmembrane segment at 777-797 threads the bilayer; the sequence is GLAVILDFLLQMSAFVALLSL. Residues 798-846 are Cytoplasmic-facing; sequence DSKRQEASRLDVCCCVKPQELPPPGQGEGLLLGFFQKAYAPFLLHWITR. A helical membrane pass occupies residues 847 to 867; that stretch reads GVVLLLFLALFGVSLYSMCHI. The Extracellular portion of the chain corresponds to 868–1139; sequence SVGLDQELAL…EQYLTILPEG (272 aa). Disulfide bonds link C920–C925, C966–C1024, and C980–C989. Residues 1140 to 1160 traverse the membrane as a helical segment; that stretch reads LFMLSLCLVPTFAVSCLLLGL. Residues 1161–1168 lie on the Cytoplasmic side of the membrane; the sequence is DLRSGLLN. A helical membrane pass occupies residues 1169–1189; sequence LLSIVMILVDTVGFMALWGIS. Residues 1190-1191 are Extracellular-facing; sequence YN. Residues 1192-1212 form a helical membrane-spanning segment; it reads AVSLINLVSAVGMSVEFVSHI. Residues 1213-1236 lie on the Cytoplasmic side of the membrane; the sequence is TRSFAISTKPTWLERAKEATISMG. A helical transmembrane segment spans residues 1237 to 1257; the sequence is SAVFAGVAMTNLPGILVLGLA. Topologically, residues 1258 to 1268 are extracellular; it reads KAQLIQIFFFR. A helical transmembrane segment spans residues 1269 to 1289; sequence LNLLITLLGLLHGLVFLPVIL. Residues 1290-1359 are Cytoplasmic-facing; that stretch reads SYVGPDVNPA…NFLPNNGRQF (70 aa).

Belongs to the patched family. In terms of assembly, interacts with RAB11A, MYO5B and RAB11FIP2. Interaction with RAB11A, MYO5B and RAB11FIP2 is required for proper transport to the plasma membrane upon cholesterol depletion. Interacts with NPC2. Interacts with LIMA1. Post-translationally, highly glycosylated. In terms of tissue distribution, widely expressed. Expressed in liver. Also expressed in small intestine, pancreas, kidney, lung, pancreas, spleen, heart, gall bladder, brain, testis, stomach and muscle.

The protein localises to the apical cell membrane. Its subcellular location is the cell membrane. It localises to the cytoplasmic vesicle membrane. It carries out the reaction cholesterol(in) = cholesterol(out). The catalysed reaction is sitosterol(out) = sitosterol(in). Functionally, plays a major role in cholesterol homeostasis. Critical for the uptake of cholesterol across the plasma membrane of the intestinal enterocyte. Involved in plant sterol absorption, it transports sitosterol, although at lower rates than cholesterol. Is the direct molecular target of ezetimibe, a drug that inhibits cholesterol absorption and is approved for the treatment of hypercholesterolemia. May have a function in the transport of multiple lipids and their homeostasis, thereby influencing lipid metabolism regulation. May be involved in caveolin trafficking from the plasma membrane. In addition, acts as a negative regulator of NPC2 and down-regulates its expression and secretion by inhibiting its maturation and accelerating its degradation. The sequence is that of NPC1-like intracellular cholesterol transporter 1 from Homo sapiens (Human).